We begin with the raw amino-acid sequence, 199 residues long: Peroxynitrite isomerase (199 aa).

The GXWXGXG motif lies at 20–26; sequence GVWEGSG. Heme b is bound by residues lysine 158 and histidine 190.

The protein belongs to the nitrobindin family. As to quaternary structure, homodimer. It depends on heme b as a cofactor.

It catalyses the reaction peroxynitrite = nitrate. It functions in the pathway nitrogen metabolism. Its function is as follows. Heme-binding protein able to scavenge peroxynitrite and to protect free L-tyrosine against peroxynitrite-mediated nitration, by acting as a peroxynitrite isomerase that converts peroxynitrite to nitrate. Therefore, this protein likely plays a role in peroxynitrite sensing and in the detoxification of reactive nitrogen and oxygen species (RNS and ROS, respectively). Is able to bind nitric oxide (NO) in vitro, but may act as a sensor of peroxynitrite levels in vivo. The sequence is that of Peroxynitrite isomerase from Clavibacter sepedonicus (Clavibacter michiganensis subsp. sepedonicus).